The primary structure comprises 312 residues: DNA-directed RNA polymerase subunit alpha (312 aa).

Residues 1-226 (MIEFEKPIIT…EHLNLFTDLT (226 aa)) form an alpha N-terminal domain (alpha-NTD) region. Positions 243–312 (DEKVLDRTIE…DLGLGLKNDK (70 aa)) are alpha C-terminal domain (alpha-CTD).

This sequence belongs to the RNA polymerase alpha chain family. In terms of assembly, homodimer. The RNAP catalytic core consists of 2 alpha, 1 beta, 1 beta' and 1 omega subunit. When a sigma factor is associated with the core the holoenzyme is formed, which can initiate transcription.

The enzyme catalyses RNA(n) + a ribonucleoside 5'-triphosphate = RNA(n+1) + diphosphate. Its function is as follows. DNA-dependent RNA polymerase catalyzes the transcription of DNA into RNA using the four ribonucleoside triphosphates as substrates. The protein is DNA-directed RNA polymerase subunit alpha of Streptococcus pyogenes serotype M1.